The sequence spans 349 residues: 1-acylglycerol-3-phosphate O-acyltransferase ABHD5 (349 aa).

The residue at position 2 (A2) is an N-acetylalanine. In terms of domain architecture, AB hydrolase-1 spans 77–185 (PLVLLHGFGG…VEPWGFPERP (109 aa)). Positions 327–332 (HYVYAD) match the HXXXXD motif motif.

The protein belongs to the peptidase S33 family. ABHD4/ABHD5 subfamily. As to quaternary structure, interacts with ADRP, PLIN and PNPLA2. Interacts with PLIN5; promotes interaction with PNPLA2.

It is found in the cytoplasm. Its subcellular location is the lipid droplet. The catalysed reaction is a 1-acyl-sn-glycero-3-phosphate + an acyl-CoA = a 1,2-diacyl-sn-glycero-3-phosphate + CoA. It catalyses the reaction 1-(9Z-octadecenoyl)-sn-glycero-3-phosphate + (9Z)-octadecenoyl-CoA = 1,2-di-(9Z-octadecenoyl)-sn-glycero-3-phosphate + CoA. The enzyme catalyses 1-(9Z-octadecenoyl)-sn-glycero-3-phosphate + hexadecanoyl-CoA = 1-(9Z)-octadecenoyl-2-hexadecanoyl-sn-glycero-3-phosphate + CoA. It carries out the reaction 1-(9Z-octadecenoyl)-sn-glycero-3-phosphate + octadecanoyl-CoA = 1-(9Z-octadecenoyl)-2-octadecanoyl-sn-glycero-3-phosphate + CoA. The catalysed reaction is 1-(9Z-octadecenoyl)-sn-glycero-3-phosphate + (5Z,8Z,11Z,14Z)-eicosatetraenoyl-CoA = 1-(9Z)-octadecenoyl-2-(5Z,8Z,11Z,14Z)-eicosatetraenoyl-sn-glycero-3-phosphate + CoA. It catalyses the reaction eicosanoyl-CoA + 1-(9Z-octadecenoyl)-sn-glycero-3-phosphate = 1-(9Z)-octadecenoyl-2-eicosanoyl-sn-glycero-3-phosphate + CoA. The enzyme catalyses 1-hexadecanoyl-sn-glycero-3-phosphate + (9Z)-octadecenoyl-CoA = 1-hexadecanoyl-2-(9Z-octadecenoyl)-sn-glycero-3-phosphate + CoA. It carries out the reaction 1-octadecanoyl-sn-glycero-3-phosphate + (9Z)-octadecenoyl-CoA = 1-octadecanoyl-2-(9Z-octadecenoyl)-sn-glycero-3-phosphate + CoA. The catalysed reaction is 1-(5Z,8Z,11Z,14Z-eicosatetraenoyl)-sn-glycero-3-phosphate + (9Z)-octadecenoyl-CoA = 1-(5Z,8Z,11Z,14Z)-eicosatetraenoyl-2-(9Z)-octadecenoyl-sn-glycero-3-phosphate + CoA. Acyltransferase activity is inhibited by detergents such as Triton X-100 and 3-[(3-cholamidopropyl)dimethylammonio]-1-propanesulfonate (CHAPS). Acyltransferase activity is inhibited by the presence of magnesium and calcium. Coenzyme A-dependent lysophosphatidic acid acyltransferase that catalyzes the transfer of an acyl group on a lysophosphatidic acid. Functions preferentially with 1-oleoyl-lysophosphatidic acid followed by 1-palmitoyl-lysophosphatidic acid, 1-stearoyl-lysophosphatidic acid and 1-arachidonoyl-lysophosphatidic acid as lipid acceptor. Functions preferentially with arachidonoyl-CoA followed by oleoyl-CoA as acyl group donors. Functions in phosphatidic acid biosynthesis. May regulate the cellular storage of triacylglycerol through activation of the phospholipase PNPLA2. Involved in keratinocyte differentiation. Regulates lipid droplet fusion. This Sus scrofa (Pig) protein is 1-acylglycerol-3-phosphate O-acyltransferase ABHD5.